The following is a 151-amino-acid chain: Ribosomal RNA large subunit methyltransferase H (151 aa).

Residues leucine 70, glycine 99, and 118–123 contribute to the S-adenosyl-L-methionine site; that span reads LSKLTF.

It belongs to the RNA methyltransferase RlmH family. Homodimer.

Its subcellular location is the cytoplasm. The enzyme catalyses pseudouridine(1915) in 23S rRNA + S-adenosyl-L-methionine = N(3)-methylpseudouridine(1915) in 23S rRNA + S-adenosyl-L-homocysteine + H(+). Its function is as follows. Specifically methylates the pseudouridine at position 1915 (m3Psi1915) in 23S rRNA. The chain is Ribosomal RNA large subunit methyltransferase H from Gloeobacter violaceus (strain ATCC 29082 / PCC 7421).